Reading from the N-terminus, the 99-residue chain is Nucleoid-associated protein SpyM3_1606 (99 aa).

Belongs to the YbaB/EbfC family. In terms of assembly, homodimer.

Its subcellular location is the cytoplasm. It localises to the nucleoid. In terms of biological role, binds to DNA and alters its conformation. May be involved in regulation of gene expression, nucleoid organization and DNA protection. In Streptococcus pyogenes serotype M3 (strain ATCC BAA-595 / MGAS315), this protein is Nucleoid-associated protein SpyM3_1606.